The chain runs to 365 residues: Glycosyltransferase 8 domain-containing protein 1 (365 aa).

At 1-4 (MTVR) the chain is on the cytoplasmic side. The chain crosses the membrane as a helical; Signal-anchor for type II membrane protein span at residues 5–22 (RVNVVILVLLVVAFLIVL). At 23-365 (HRNLLNLNDF…HPIRKHVEEK (343 aa)) the chain is on the lumenal side. N-linked (GlcNAc...) asparagine glycosylation is found at asparagine 102, asparagine 181, asparagine 245, and asparagine 253.

It belongs to the glycosyltransferase 8 family.

It is found in the membrane. The polypeptide is Glycosyltransferase 8 domain-containing protein 1 (glt8d1) (Danio rerio (Zebrafish)).